Consider the following 194-residue polypeptide: FMN-dependent NADH:quinone oxidoreductase (194 aa).

Residues Ser-10 and 90–93 each bind FMN; that span reads MYNL.

It belongs to the azoreductase type 1 family. As to quaternary structure, homodimer. It depends on FMN as a cofactor.

It catalyses the reaction 2 a quinone + NADH + H(+) = 2 a 1,4-benzosemiquinone + NAD(+). It carries out the reaction N,N-dimethyl-1,4-phenylenediamine + anthranilate + 2 NAD(+) = 2-(4-dimethylaminophenyl)diazenylbenzoate + 2 NADH + 2 H(+). In terms of biological role, quinone reductase that provides resistance to thiol-specific stress caused by electrophilic quinones. Its function is as follows. Also exhibits azoreductase activity. Catalyzes the reductive cleavage of the azo bond in aromatic azo compounds to the corresponding amines. The protein is FMN-dependent NADH:quinone oxidoreductase of Haemophilus influenzae (strain ATCC 51907 / DSM 11121 / KW20 / Rd).